A 219-amino-acid polypeptide reads, in one-letter code: uncharacterized protein (219 aa).

The region spanning 57–158 (QLEHMTRAAM…LSEASRQTLL (102 aa)) is the HD domain.

This is an uncharacterized protein from Acanthamoeba polyphaga mimivirus (APMV).